The sequence spans 216 residues: Squamosa promoter-binding-like protein 13 (216 aa).

A disordered region spans residues Gly-32 to Cys-110. Positions Ser-67–Arg-91 are enriched in low complexity. Residues Gly-94–Pro-108 are compositionally biased toward gly residues. An SBP-type zinc finger spans residues Gly-107–Ser-184. Positions 110, 115, 132, 135, 151, 154, 158, and 170 each coordinate Zn(2+). The short motif at Lys-167–Lys-183 is the Bipartite nuclear localization signal element. Residues Ala-175–Arg-216 are disordered. Basic and acidic residues predominate over residues Ala-189 to Arg-203. Polar residues predominate over residues His-205–Arg-216.

In terms of tissue distribution, ubiquitous.

The protein resides in the nucleus. Its function is as follows. Trans-acting factor that binds specifically to the consensus nucleotide sequence 5'-TNCGTACAA-3'. May be involved in panicle development. The polypeptide is Squamosa promoter-binding-like protein 13 (SPL13) (Oryza sativa subsp. japonica (Rice)).